A 574-amino-acid polypeptide reads, in one-letter code: Septation ring formation regulator EzrA (574 aa).

The Extracellular portion of the chain corresponds to 1-7 (MSSGIIL). A helical transmembrane segment spans residues 8–26 (LIVAIVLLVIIAYLIGVII). The Cytoplasmic portion of the chain corresponds to 27 to 574 (RKRNDSMIGT…YERTREHIRF (548 aa)). 3 coiled-coil regions span residues 102–140 (NFIRAKHEINNVESQLNLVEEDITSIREALSILKEQEEK), 243–379 (RRLL…GQEI), and 459–520 (QLEA…SFEA).

The protein belongs to the EzrA family.

The protein resides in the cell membrane. Functionally, negative regulator of FtsZ ring formation; modulates the frequency and position of FtsZ ring formation. Inhibits FtsZ ring formation at polar sites. Interacts either with FtsZ or with one of its binding partners to promote depolymerization. The chain is Septation ring formation regulator EzrA from Streptococcus uberis (strain ATCC BAA-854 / 0140J).